Here is a 289-residue protein sequence, read N- to C-terminus: Elongation factor Ts (289 aa).

The tract at residues 82–85 (TDFV) is involved in Mg(2+) ion dislocation from EF-Tu.

Belongs to the EF-Ts family.

The protein resides in the cytoplasm. Functionally, associates with the EF-Tu.GDP complex and induces the exchange of GDP to GTP. It remains bound to the aminoacyl-tRNA.EF-Tu.GTP complex up to the GTP hydrolysis stage on the ribosome. The protein is Elongation factor Ts of Chloroherpeton thalassium (strain ATCC 35110 / GB-78).